The following is a 415-amino-acid chain: Serine/threonine transporter SstT (415 aa).

9 helical membrane passes run 21–41 (ILLG…AALA), 45–65 (LGTL…LMLV), 83–103 (ILFL…VLSV), 142–162 (ALLN…GLAF), 193–213 (LGIF…ALWG), 217–237 (LLMV…PLIV), 299–319 (MAGA…TLGI), 331–351 (VVAS…LLLI), and 358–378 (FGIS…IGVL).

This sequence belongs to the dicarboxylate/amino acid:cation symporter (DAACS) (TC 2.A.23) family.

The protein resides in the cell inner membrane. It carries out the reaction L-serine(in) + Na(+)(in) = L-serine(out) + Na(+)(out). It catalyses the reaction L-threonine(in) + Na(+)(in) = L-threonine(out) + Na(+)(out). Involved in the import of serine and threonine into the cell, with the concomitant import of sodium (symport system). The protein is Serine/threonine transporter SstT of Pectobacterium carotovorum subsp. carotovorum (strain PC1).